The sequence spans 317 residues: Cytochrome c biogenesis protein CcsA (317 aa).

Helical transmembrane passes span 9–29 (ILTHISFSVVSIGITIYLITF), 46–63 (TATAFCLTGLLITRWVYS), 71–91 (LYESLIFLSWSLSIIHKIFDF), 98–118 (LSAITAPSAFFTQGFATSGFL), 143–163 (MVLGYAALLCGSLLSTALLVI), 225–245 (IISLGFIFLTTGILSGAVWAN), 258–273 (ETWAFITWTIFGIYLH), and 286–306 (AIVASMGFLIIWICYFGVNLL).

The protein belongs to the CcmF/CycK/Ccl1/NrfE/CcsA family. As to quaternary structure, may interact with Ccs1.

The protein resides in the plastid. Its subcellular location is the chloroplast thylakoid membrane. In terms of biological role, required during biogenesis of c-type cytochromes (cytochrome c6 and cytochrome f) at the step of heme attachment. The chain is Cytochrome c biogenesis protein CcsA from Citrus sinensis (Sweet orange).